Reading from the N-terminus, the 336-residue chain is Cyclin-H1-1 (336 aa).

Residue Ala2 is modified to N-acetylalanine. The tract at residues 297–336 (KSCLGHSSSHDESKKREKRSKHKSHRSSNDTPNGAPPPIG) is disordered. A compositionally biased stretch (basic residues) spans 312 to 322 (REKRSKHKSHR).

Belongs to the cyclin family. Interacts with CDKA-1, CDKD-2 and CDKD-3, but not CDKD-1 and CDKF-1.

The protein localises to the cytoplasm. The protein resides in the nucleus. In terms of biological role, associates with CDK-2 and CDK-3 and activates the CDK kinases. The sequence is that of Cyclin-H1-1 (CYCH1-1) from Arabidopsis thaliana (Mouse-ear cress).